We begin with the raw amino-acid sequence, 74 residues long: MMSKLGVLLTVCLLLFPLTALPLDGDQPADQLEDRMQDDISSEQYPSFVRRQKCCGEGSSCPKYFKNNFICGCC.

The N-terminal stretch at 1-20 (MMSKLGVLLTVCLLLFPLTA) is a signal peptide. The propeptide occupies 21–53 (LPLDGDQPADQLEDRMQDDISSEQYPSFVRRQK). 3 disulfide bridges follow: cysteine 54–cysteine 71, cysteine 55–cysteine 73, and cysteine 61–cysteine 74.

It belongs to the conotoxin M superfamily. Three disulfide isomers have been synthesized and tested. SIIID with the disulfide pairing 1-4;2-5;3-6 is the most active. Expressed by the venom duct.

It localises to the secreted. Its function is as follows. The short synthetic peptide SIIID (range 54-74, with disulfide pairing 1-4, 2-5 and 3-6) reversibly inhibits human alpha-7/CHRNA7 acetylcholine receptor (IC(50)=880 nM). Shows a paralytic effect in fish. This chain is Conotoxin SIIID, found in Conus striatus (Striated cone).